A 370-amino-acid chain; its full sequence is uncharacterized protein (370 aa).

This is an uncharacterized protein from Acanthamoeba polyphaga (Amoeba).